We begin with the raw amino-acid sequence, 154 residues long: MARSTARRRALNTLYEADEKGQDFLSLLDERIAQPGAQTPLPEYAIEIVRGVDEHRRDIDSQLNTHSTGWKVKRMHAIDRNILRIATWEILYNDDVPDKVAIDEALNLSKTLSDDAAPSFIHGVLSAIVAAKDKQSPQSTPLDDSDKDESDQTN.

A disordered region spans residues 132-154 (KDKQSPQSTPLDDSDKDESDQTN). Residues 143–154 (DDSDKDESDQTN) are compositionally biased toward acidic residues.

Belongs to the NusB family.

In terms of biological role, involved in transcription antitermination. Required for transcription of ribosomal RNA (rRNA) genes. Binds specifically to the boxA antiterminator sequence of the ribosomal RNA (rrn) operons. This is Transcription antitermination protein NusB from Bifidobacterium animalis subsp. lactis (strain AD011).